The following is a 668-amino-acid chain: Acyl-CoA-binding domain-containing protein 4 (668 aa).

In terms of domain architecture, ACB spans 12-106 (YPERFYAAAS…LEEDDPGWYS (95 aa)). An acyl-CoA-binding positions include K33, 48–52 (YALYQ), and K74. 6 Kelch repeats span residues 195–242 (KMYI…TLLA), 255–305 (KLLS…MVGK), 307–356 (LVIF…VHAE), 358–407 (FLLI…TIGE), 408–456 (NWFI…LVVS), and 463–508 (VLVA…VNNA). 2 positions are modified to phosphoserine: S515 and S520. Residues 538-647 (KVEGNSERII…EQAAMNAKRQ (110 aa)) are a coiled coil. The interval 639–668 (QAAMNAKRQGSGGVWGWLAGSPQEKDDDSP) is disordered.

Belongs to the ACBP family. In terms of assembly, interacts with RAP2-3/EBP, an ethylene-responsive element binding protein. As to expression, mostly expressed in roots, stems, and leaves, and, to a lower extent, in flowers and siliques.

The protein resides in the cytoplasm. Functionally, binds medium- and long-chain acyl-CoA esters with very high affinity. Can interact in vitro with oleoyl-CoA, barely with palmitoyl-CoA, but not with arachidonyl-CoA. May function as an intracellular carrier of acyl-CoA esters. Plays a role in the biosynthesis of membrane lipids including galactolipids and phospholipids. In Arabidopsis thaliana (Mouse-ear cress), this protein is Acyl-CoA-binding domain-containing protein 4 (ACBP4).